The following is a 282-amino-acid chain: Mitochondrial outer membrane protein porin (282 aa).

The protein belongs to the eukaryotic mitochondrial porin family.

It is found in the mitochondrion outer membrane. Its function is as follows. Forms a channel through the cell membrane that allows diffusion of small hydrophilic molecules. The channel adopts an open conformation at low or zero membrane potential and a closed conformation at potentials above 30-40 mV. The open state has a weak anion selectivity whereas the closed state is cation-selective. This chain is Mitochondrial outer membrane protein porin (POR1), found in Candida albicans (strain SC5314 / ATCC MYA-2876) (Yeast).